The following is a 568-amino-acid chain: Acyl-CoA ligase gloD (568 aa).

Residues 211 to 219 (TSGTSGFLK), 352 to 357 (PGYGLT), Asp-436, Arg-455, and Lys-553 contribute to the ATP site. The interval 282 to 352 (DMQIALKSVQ…QLCPEWEINP (71 aa)) is SBD1. The segment at 353–415 (GYGLTESFVC…VRSPSVMKEY (63 aa)) is SBD2.

The protein belongs to the ATP-dependent AMP-binding enzyme family.

It participates in mycotoxin biosynthesis. Functionally, acyl-CoA ligase; part of the gene cluster that mediates the biosynthesis of pneumocandins, lipohexapeptides of the echinocandin family that prevent fungal cell wall formation by non-competitive inhibition of beta-1,3-glucan synthase. The 10,12-dimethylmyristoyl side chain is synthesized by the reducing polyketide synthase gloL/GLPKS4. The thioesterase gloN/GLHYD exclusively interacts with gloL/GLPKS4 to maintain turnover of the polyketide side chain. The 10R,12S-dimethylmyristic acid is then transferred to the first thiolation domain of the nonribosomal peptide synthetase gloA/GLNRPS4 by the acyl-AMP ligase gloD/GLligase, followed by its acylation to L-ornithine to trigger elongation of the cyclic hexapeptide. L-ornithine, 4R-hydroxyl-L-proline (generated from L-proline by the dioxygenase gloF/GLOXY2), 3S-hydroxyl-L-homotyrosine (generated by gloG/GLHtyB, gloH/GLHtyA, gloI/GLHtyC, gloJ/GLHtyD and hydroxylated at C-3 by the dioxygenase gloM/GLOXY1), 3R-hydroxyl-L-glutamine (generated from L-glutamine probably by the dioxygenase gloE/GLOXY3) and 3S-hydroxyl-L-proline (generated from L-proline by the dioxygenase gloF/GLOXY2 to yield pneumocandin B0), or 3S-hydroxyl-4S-methyl-L-proline (generated from L-leucine by the dioxygenase gloC/GLOXY4 to yield pneumocandin A0) are sequentially added to the growing chain. The last C domain of gloA/GLNRPS4 is proposed to be responsible for cyclization by condensation to form the peptide bond between L-ornithine and 3S-hydroxyl-4S-methyl-L-proline (for pneumocandin A0) or 3S-hydroxyl-L-proline (for pneumocandin B0). Finally, the subsequent C-4 hydroxylation of 3S-hydroxyl-L-homotyrosine and L-ornithine dihydroxylation at C-4 and C-5 are performed by the cytochrome P450 monooxygenases gloP/GLP450-1 and gloO/GLP450-2, respectively. This Glarea lozoyensis (strain ATCC 20868 / MF5171) protein is Acyl-CoA ligase gloD.